A 145-amino-acid polypeptide reads, in one-letter code: Small ribosomal subunit protein eS19 (145 aa).

N6-acetyllysine is present on Lys23. Arg67 is modified (omega-N-methylarginine). Lys111 and Lys115 each carry N6-acetyllysine. N6-succinyllysine is present on Lys143.

It belongs to the eukaryotic ribosomal protein eS19 family. In terms of assembly, component of the small ribosomal subunit. Part of the small subunit (SSU) processome, composed of more than 70 proteins and the RNA chaperone small nucleolar RNA (snoRNA) U3. Interacts with RPS19BP1; the interaction is direct and mediates the integration of RPS19 in state post-A1. Interacts with RPS19BP1.

The protein localises to the cytoplasm. Its subcellular location is the nucleus. It is found in the nucleolus. Its function is as follows. Component of the small ribosomal subunit. The ribosome is a large ribonucleoprotein complex responsible for the synthesis of proteins in the cell. Required for pre-rRNA processing and maturation of 40S ribosomal subunits. Part of the small subunit (SSU) processome, first precursor of the small eukaryotic ribosomal subunit. During the assembly of the SSU processome in the nucleolus, many ribosome biogenesis factors, an RNA chaperone and ribosomal proteins associate with the nascent pre-rRNA and work in concert to generate RNA folding, modifications, rearrangements and cleavage as well as targeted degradation of pre-ribosomal RNA by the RNA exosome. This is Small ribosomal subunit protein eS19 (RPS19) from Pongo abelii (Sumatran orangutan).